The sequence spans 341 residues: Protein CbhE (341 aa).

Positions 287–297 (IDEENTSDSSE) are enriched in acidic residues. The tract at residues 287–341 (IDEENTSDSSEEGTSKNRFRDTLFSNVPDSSSDSENEQEREKKELAGKTPSFRLC) is disordered. Over residues 323–332 (EQEREKKELA) the composition is skewed to basic and acidic residues.

It localises to the cytoplasm. Its function is as follows. May be involved in the pathogenesis of acute Q fever. This is Protein CbhE (cbhE) from Coxiella burnetii (strain RSA 493 / Nine Mile phase I).